The chain runs to 109 residues: Putative double-stranded DNA mimic protein YciU (109 aa).

The protein belongs to the putative dsDNA mimic protein family.

Functionally, may act as a double-stranded DNA (dsDNA) mimic. Probably regulates the activity of a dsDNA-binding protein. In Shigella flexneri, this protein is Putative double-stranded DNA mimic protein YciU.